Consider the following 275-residue polypeptide: Large ribosomal subunit protein uL2 (275 aa).

The disordered stretch occupies residues 223–260 (VAMNPVDHPHGGGEGRTSGGRHPVSPWGLPTKGYKTRS).

Belongs to the universal ribosomal protein uL2 family. As to quaternary structure, part of the 50S ribosomal subunit. Forms a bridge to the 30S subunit in the 70S ribosome.

Functionally, one of the primary rRNA binding proteins. Required for association of the 30S and 50S subunits to form the 70S ribosome, for tRNA binding and peptide bond formation. It has been suggested to have peptidyltransferase activity; this is somewhat controversial. Makes several contacts with the 16S rRNA in the 70S ribosome. This is Large ribosomal subunit protein uL2 from Legionella pneumophila (strain Paris).